We begin with the raw amino-acid sequence, 444 residues long: Glutamate--tRNA ligase 2 (444 aa).

The short motif at 8-18 (PSPTGHLHAGN) is the 'HIGH' region element. The 'KMSKS' region motif lies at 241-245 (KLSKR). Lysine 244 contacts ATP.

It belongs to the class-I aminoacyl-tRNA synthetase family. Glutamate--tRNA ligase type 1 subfamily. In terms of assembly, monomer.

Its subcellular location is the cytoplasm. It carries out the reaction tRNA(Glu) + L-glutamate + ATP = L-glutamyl-tRNA(Glu) + AMP + diphosphate. Functionally, catalyzes the attachment of glutamate to tRNA(Glu) in a two-step reaction: glutamate is first activated by ATP to form Glu-AMP and then transferred to the acceptor end of tRNA(Glu). In Acidiphilium cryptum (strain JF-5), this protein is Glutamate--tRNA ligase 2.